The primary structure comprises 217 residues: Peroxiredoxin (217 aa).

Positions 2 to 159 (AVIGEKFPDV…VVRLVKALQT (158 aa)) constitute a Thioredoxin domain. Cysteine 46 acts as the Cysteine sulfenic acid (-SOH) intermediate in catalysis. Arginine 122 contacts substrate.

The protein belongs to the peroxiredoxin family. Prx6 subfamily. In terms of assembly, homodecamer. Pentamer of dimers that assemble into a ring structure.

It localises to the cytoplasm. The catalysed reaction is a hydroperoxide + [thioredoxin]-dithiol = an alcohol + [thioredoxin]-disulfide + H2O. In terms of biological role, thiol-specific peroxidase that catalyzes the reduction of hydrogen peroxide and organic hydroperoxides to water and alcohols, respectively. Plays a role in cell protection against oxidative stress by detoxifying peroxides. The polypeptide is Peroxiredoxin (Methanococcus vannielii (strain ATCC 35089 / DSM 1224 / JCM 13029 / OCM 148 / SB)).